Reading from the N-terminus, the 262-residue chain is Beta-phosphoglucomutase (262 aa).

D29 functions as the Nucleophile in the catalytic mechanism. Mg(2+)-binding residues include D29 and D31. At D29 the chain carries 4-aspartylphosphate. The Proton donor/acceptor role is filled by D31. Positions 31, 79, 82, 157, and 159 each coordinate beta-D-glucose 6-phosphate. D215 serves as a coordination point for Mg(2+).

Belongs to the HAD-like hydrolase superfamily. CbbY/CbbZ/Gph/YieH family. As to quaternary structure, monomer. Mg(2+) is required as a cofactor. Autophosphorylated.

It carries out the reaction beta-D-glucose 1-phosphate = beta-D-glucose 6-phosphate. Its function is as follows. Catalyzes the interconversion of D-glucose 1-phosphate (G1P) and D-glucose 6-phosphate (G6P), forming beta-D-glucose 1,6-(bis)phosphate (beta-G16P) as an intermediate. The polypeptide is Beta-phosphoglucomutase (Mycobacterium bovis (strain ATCC BAA-935 / AF2122/97)).